The sequence spans 481 residues: Drebrin-like protein (481 aa).

The 129-residue stretch at 3–131 (SLDISDPDIT…DEKAITAALN (129 aa)) folds into the ADF-H domain. A compositionally biased stretch (basic and acidic residues) spans 217-227 (YWKQQQAEKQK). The disordered stretch occupies residues 217 to 423 (YWKQQQAEKQ…PAEEQYDQSG (207 aa)). The span at 228-237 (QQQQQQQQQA) shows a compositional bias: low complexity. Polar residues predominate over residues 248-261 (TVGNKFQEQVSKPT). Pro residues predominate over residues 291–300 (PPAPSRPAAP). The span at 325 to 335 (QYEEPQYEEEQ) shows a compositional bias: acidic residues. Residues 336 to 413 (QQQYEEQPTE…YQEEQQQYEQ (78 aa)) are compositionally biased toward low complexity. One can recognise an SH3 domain in the interval 422 to 481 (SGYLQAKALYDYNGENDGDLSFREGDIITILDQSDPDGWWQGSLPTGEQGFFPSNFVQQL).

This sequence belongs to the ABP1 family.

It is found in the cytoplasm. The protein localises to the cytoskeleton. Its subcellular location is the cell projection. It localises to the pseudopodium. Functionally, actin-binding adapter protein. Binds to F-actin but is not involved in actin polymerization, capping or bundling. Does not bind G-actin. Controls pseudopodium number and motility in early stages of chemotactic aggregation. This chain is Drebrin-like protein (abpE-1), found in Dictyostelium discoideum (Social amoeba).